A 342-amino-acid polypeptide reads, in one-letter code: tRNA N6-adenosine threonylcarbamoyltransferase (342 aa).

Residues H115 and H119 each contribute to the Fe cation site. Substrate-binding positions include 138–142 (LVSGG), D171, G184, and N276. D304 is a Fe cation binding site.

It belongs to the KAE1 / TsaD family. Fe(2+) is required as a cofactor.

The protein resides in the cytoplasm. The enzyme catalyses L-threonylcarbamoyladenylate + adenosine(37) in tRNA = N(6)-L-threonylcarbamoyladenosine(37) in tRNA + AMP + H(+). In terms of biological role, required for the formation of a threonylcarbamoyl group on adenosine at position 37 (t(6)A37) in tRNAs that read codons beginning with adenine. Is involved in the transfer of the threonylcarbamoyl moiety of threonylcarbamoyl-AMP (TC-AMP) to the N6 group of A37, together with TsaE and TsaB. TsaD likely plays a direct catalytic role in this reaction. This Dichelobacter nodosus (strain VCS1703A) protein is tRNA N6-adenosine threonylcarbamoyltransferase.